A 268-amino-acid polypeptide reads, in one-letter code: MICOS complex subunit MIC27 (268 aa).

The N-terminal 27 residues, 1–27, are a transit peptide targeting the mitochondrion; sequence MAAIRMGKLTTMPAGLIYASVSVHAAK. At 28–110 the chain is on the mitochondrial intermembrane side; the sequence is QEESKKQLVK…YVYLKNPPRD (83 aa). Residues 111–129 form a helical membrane-spanning segment; sequence FLPKMGVITVSGLAGLVSA. Over 130–137 the chain is Mitochondrial matrix; that stretch reads RKGSKFKK. Residues 138 to 155 form a helical membrane-spanning segment; it reads ITYPLGLATLGATVCYPV. At 156-268 the chain is on the mitochondrial intermembrane side; the sequence is QSVIIAKVTA…EDIDMYSTRS (113 aa). Residues 187–200 are compositionally biased toward basic and acidic residues; that stretch reads SKEESLPKPKEKTK. The disordered stretch occupies residues 187–268; it reads SKEESLPKPK…EDIDMYSTRS (82 aa). Position 204 is a phosphoserine (serine 204). A compositionally biased stretch (basic and acidic residues) spans 249-260; it reads KLMDHGQSHPED.

The protein belongs to the apolipoprotein O/MICOS complex subunit Mic27 family. In terms of assembly, component of the mitochondrial contact site and cristae organizing system (MICOS) complex, composed of at least MICOS10/MIC10, CHCHD3/MIC19, CHCHD6/MIC25, APOOL/MIC27, IMMT/MIC60, APOO/MIC23/MIC26 and MICOS13/MIC13. This complex was also known under the names MINOS or MitOS complex. The MICOS complex associates with mitochondrial outer membrane proteins SAMM50, MTX1 and MTX2 (together described as components of the mitochondrial outer membrane sorting assembly machinery (SAM) complex) and DNAJC11, mitochondrial inner membrane protein TMEM11 and with HSPA9. The MICOS and SAM complexes together with DNAJC11 are part of a large protein complex spanning both membranes termed the mitochondrial intermembrane space bridging (MIB) complex. Interacts with MICOS10/MIC10, IMMT/MIC60 and APOO/MIC23/MIC26.

It localises to the mitochondrion inner membrane. Its subcellular location is the mitochondrion. In terms of biological role, component of the MICOS complex, a large protein complex of the mitochondrial inner membrane that plays crucial roles in the maintenance of crista junctions, inner membrane architecture, and formation of contact sites to the outer membrane. Specifically binds to cardiolipin (in vitro) but not to the precursor lipid phosphatidylglycerol. Plays a crucial role in crista junction formation and mitochondrial function,. In Homo sapiens (Human), this protein is MICOS complex subunit MIC27 (APOOL).